The sequence spans 269 residues: tRNA pseudouridine synthase A (269 aa).

The Nucleophile role is filled by D51. Y109 is a substrate binding site.

This sequence belongs to the tRNA pseudouridine synthase TruA family. In terms of assembly, homodimer.

The enzyme catalyses uridine(38/39/40) in tRNA = pseudouridine(38/39/40) in tRNA. In terms of biological role, formation of pseudouridine at positions 38, 39 and 40 in the anticodon stem and loop of transfer RNAs. In Haemophilus influenzae (strain ATCC 51907 / DSM 11121 / KW20 / Rd), this protein is tRNA pseudouridine synthase A.